Consider the following 618-residue polypeptide: Grainyhead-like protein 1 homolog (618 aa).

The transcription activation stretch occupies residues 1–91 (MTQEYDNKRP…EVEHPEPDHS (91 aa)). Residues 74 to 92 (RRSSTAKPEVEHPEPDHSK) are compositionally biased toward basic and acidic residues. The disordered stretch occupies residues 74–94 (RRSSTAKPEVEHPEPDHSKRN). Thr208 bears the Phosphothreonine mark. The 227-residue stretch at 248 to 474 (SGNNFEYTLE…DLDTQPVLFI (227 aa)) folds into the Grh/CP2 DB domain. 2 interaction with DNA regions span residues 380 to 389 (TDFSSQKGVK) and 427 to 430 (RKIR).

It belongs to the grh/CP2 family. Grainyhead subfamily. In terms of assembly, binds DNA as homodimer. Homodimer, also forms heterodimers with GRHL2 or GRHL3. Post-translationally, methylation at Arg-9 and Lys-116 may be involved in regulating transcriptional activation.

The protein localises to the nucleus. In terms of biological role, transcription factor involved in epithelial development. Binds directly to the consensus DNA sequence 5'-AACCGGTT-3'. Important regulator of DSG1 in the context of hair anchorage and epidermal differentiation, participates in the maintenance of the skin barrier. There is no genetic interaction with GRHL3, nor functional cooperativity due to diverse target gene selectivity during epithelia development. May play a role in regulating glucose homeostasis and insulin signaling. The polypeptide is Grainyhead-like protein 1 homolog (GRHL1) (Pongo abelii (Sumatran orangutan)).